The following is an 896-amino-acid chain: Desmocollin-3 (896 aa).

A signal peptide spans 1–27 (MAAAGPRRSVRGAVCLHLLLTLVIFSR). Positions 28 to 135 (AGEACKKVIL…RETVLRRAKR (108 aa)) are excised as a propeptide. Cadherin domains are found at residues 136-243 (RWAP…HPVF), 244-355 (TEAI…APTF), 356-471 (RQNA…GPEC), 472-579 (TPAA…EILQ), and 580-690 (EYVV…ILGK). Topologically, residues 136-690 (RWAPIPCSMQ…SRSTGVILGK (555 aa)) are extracellular. N166 is a glycosylation site (N-linked (GlcNAc...) asparagine). Residues N392, N546, and N629 are each glycosylated (N-linked (GlcNAc...) asparagine). The helical transmembrane segment at 691–711 (WAILAILLGIALLFSVLLTLV) threads the bilayer. The Cytoplasmic segment spans residues 712-896 (CGVFGATKGK…ITLAEACTKR (185 aa)).

May form homodimers. Interacts with DSG1; there is evidence to suggest that the interaction promotes cell-cell adhesion of keratinocytes. In terms of tissue distribution, expressed throughout the basal and spinous layer of the epidermis with weak expression in the granular layer (at protein level). Also expressed in the buccal mucosa, esophagus and cervix (at protein level).

The protein localises to the cell membrane. It localises to the cell junction. Its subcellular location is the desmosome. The protein resides in the cytoplasm. Functionally, a component of desmosome cell-cell junctions which are required for positive regulation of cellular adhesion. Required for cell-cell adhesion in the epidermis, as a result required for the maintenance of the dermal cohesion and the dermal barrier function. Required for cell-cell adhesion of epithelial cell layers surrounding the telogen hair club, as a result plays an important role in telogen hair shaft anchorage. Essential for successful completion of embryo compaction and embryo development. This is Desmocollin-3 (DSC3) from Homo sapiens (Human).